We begin with the raw amino-acid sequence, 353 residues long: Photosystem II D2 protein (353 aa).

Threonine 2 is modified (N-acetylthreonine). The residue at position 2 (threonine 2) is a Phosphothreonine. A helical transmembrane segment spans residues 41-61 (CAYFALGGWFTGTTFVTSWYT). Histidine 118 contributes to the chlorophyll a binding site. Residues 125-141 (GFMLRQFELARSVQLRP) form a helical membrane-spanning segment. Pheophytin a contacts are provided by glutamine 130 and asparagine 143. Residues 153–166 (VFVSVFLIYPLGQS) traverse the membrane as a helical segment. Histidine 198 provides a ligand contact to chlorophyll a. Residues 208–228 (AALLCAIHGATVENTLFEDGD) traverse the membrane as a helical segment. A plastoquinone contacts are provided by histidine 215 and phenylalanine 262. Position 215 (histidine 215) interacts with Fe cation. Histidine 269 serves as a coordination point for Fe cation. A helical membrane pass occupies residues 279–295 (GLWMSAIGVVGLALNLR).

It belongs to the reaction center PufL/M/PsbA/D family. PSII is composed of 1 copy each of membrane proteins PsbA, PsbB, PsbC, PsbD, PsbE, PsbF, PsbH, PsbI, PsbJ, PsbK, PsbL, PsbM, PsbT, PsbX, PsbY, PsbZ, Psb30/Ycf12, at least 3 peripheral proteins of the oxygen-evolving complex and a large number of cofactors. It forms dimeric complexes. The cofactor is The D1/D2 heterodimer binds P680, chlorophylls that are the primary electron donor of PSII, and subsequent electron acceptors. It shares a non-heme iron and each subunit binds pheophytin, quinone, additional chlorophylls, carotenoids and lipids. There is also a Cl(-1) ion associated with D1 and D2, which is required for oxygen evolution. The PSII complex binds additional chlorophylls, carotenoids and specific lipids..

Its subcellular location is the plastid. The protein resides in the chloroplast thylakoid membrane. It carries out the reaction 2 a plastoquinone + 4 hnu + 2 H2O = 2 a plastoquinol + O2. Photosystem II (PSII) is a light-driven water:plastoquinone oxidoreductase that uses light energy to abstract electrons from H(2)O, generating O(2) and a proton gradient subsequently used for ATP formation. It consists of a core antenna complex that captures photons, and an electron transfer chain that converts photonic excitation into a charge separation. The D1/D2 (PsbA/PsbD) reaction center heterodimer binds P680, the primary electron donor of PSII as well as several subsequent electron acceptors. D2 is needed for assembly of a stable PSII complex. The sequence is that of Photosystem II D2 protein from Drimys granadensis.